Consider the following 440-residue polypeptide: Ribosomal protein uS12 methylthiotransferase RimO (440 aa).

In terms of domain architecture, MTTase N-terminal spans 5–116 (PTIAISHLGC…IVSVIERAEQ (112 aa)). 6 residues coordinate [4Fe-4S] cluster: cysteine 14, cysteine 50, cysteine 79, cysteine 154, cysteine 158, and cysteine 161. The Radical SAM core domain maps to 140 to 370 (TTTEGVAYLR…ALQQPISWRK (231 aa)). Residues 372–438 (QQEVGKTVEV…EYDLFGQVVS (67 aa)) enclose the TRAM domain.

It belongs to the methylthiotransferase family. RimO subfamily. [4Fe-4S] cluster is required as a cofactor.

The protein resides in the cytoplasm. The catalysed reaction is L-aspartate(89)-[ribosomal protein uS12]-hydrogen + (sulfur carrier)-SH + AH2 + 2 S-adenosyl-L-methionine = 3-methylsulfanyl-L-aspartate(89)-[ribosomal protein uS12]-hydrogen + (sulfur carrier)-H + 5'-deoxyadenosine + L-methionine + A + S-adenosyl-L-homocysteine + 2 H(+). In terms of biological role, catalyzes the methylthiolation of an aspartic acid residue of ribosomal protein uS12. The polypeptide is Ribosomal protein uS12 methylthiotransferase RimO (Nostoc sp. (strain PCC 7120 / SAG 25.82 / UTEX 2576)).